We begin with the raw amino-acid sequence, 200 residues long: Protein OPI10 homolog (200 aa).

The protein belongs to the OPI10 family.

The protein resides in the cytoplasm. It localises to the nucleus envelope. This chain is Protein OPI10 homolog, found in Schizosaccharomyces pombe (strain 972 / ATCC 24843) (Fission yeast).